We begin with the raw amino-acid sequence, 549 residues long: Cation/acetate symporter ActP (549 aa).

13 consecutive transmembrane segments (helical) span residues 33–53, 77–97, 103–123, 148–168, 183–203, 206–226, 262–282, 303–323, 355–375, 404–424, 428–448, 464–484, and 493–513; these read WQAIIMFLIFVVFTLGITYWA, LAIAGDYMSAASFLGISALVF, GLIYSLGFLVGWPIILFLIAE, ILSACGSLVVVALYLIAQMVG, IAVVLVGVLMMMYVLFGGMLA, WVQIIKAVLLLFGASFMAFMV, ISALSLGLGLMFGTAGLPHIL, GFMGYFYILTFIIGFGAIMLV, LFLGFISAVAFATILAVVAGL, VSKITVLVLGVIAIILGVLFE, IAFMVGLAFAIAASCNFPIIL, GGWLGLLTAVVLMILGPTIWV, and IFPYEYPALFSISVAFLGIWF.

This sequence belongs to the sodium:solute symporter (SSF) (TC 2.A.21) family.

The protein localises to the cell inner membrane. In terms of biological role, transports acetate. The protein is Cation/acetate symporter ActP of Salmonella arizonae (strain ATCC BAA-731 / CDC346-86 / RSK2980).